Reading from the N-terminus, the 179-residue chain is Large ribosomal subunit protein uL6 (179 aa).

This sequence belongs to the universal ribosomal protein uL6 family. Part of the 50S ribosomal subunit.

Its function is as follows. This protein binds to the 23S rRNA, and is important in its secondary structure. It is located near the subunit interface in the base of the L7/L12 stalk, and near the tRNA binding site of the peptidyltransferase center. This Syntrophomonas wolfei subsp. wolfei (strain DSM 2245B / Goettingen) protein is Large ribosomal subunit protein uL6.